The primary structure comprises 1209 residues: Calcium-activated potassium channel subunit alpha-1 (1209 aa).

Over residues Met1–Gly23 the composition is skewed to gly residues. The interval Met1–Val61 is disordered. Over Met1 to Met86 the chain is Extracellular. The span at Arg25–Ala39 shows a compositional bias: polar residues. The segment covering Ser40–Ser60 has biased composition (low complexity). The helical transmembrane segment at Trp87–Leu107 threads the bilayer. Over Trp108–Arg178 the chain is Cytoplasmic. S-palmitoyl cysteine attachment occurs at residues Cys118, Cys119, and Cys121. The chain crosses the membrane as a helical span at residues Val179 to Ser199. Topologically, residues Ser200–Thr214 are extracellular. The helical transmembrane segment at Leu215 to Ala235 threads the bilayer. Over Ala236–Lys239 the chain is Cytoplasmic. The helical transmembrane segment at Leu240–Val260 threads the bilayer. The Extracellular portion of the chain corresponds to Ser261–Leu264. A helical; Voltage-sensor transmembrane segment spans residues Asn265 to Ile285. Over Leu286–Leu300 the chain is Cytoplasmic. The chain crosses the membrane as a helical span at residues Val301–Val321. The Extracellular portion of the chain corresponds to Glu322–Gln335. The pore-forming intramembrane region spans Ala336 to Val358. A Selectivity for potassium motif is present at residues Thr352–Tyr355. Over Tyr359–Leu367 the chain is Extracellular. The helical transmembrane segment at Phe368 to Ile388 threads the bilayer. At Glu389–Arg1209 the chain is on the cytoplasmic side. The 143-residue stretch at Arg407–Ile549 folds into the RCK N-terminal 1 domain. Mg(2+)-binding residues include Glu439, Gln462, and Glu464. The interval Leu556–Phe576 is segment S7. The interval Leu613–Ile633 is segment S8. Phosphothreonine is present on Asp670. Lys672 bears the Phosphoserine mark. Residues Cys681–His685 are heme-binding motif. Residues Glu703–Arg733 form a disordered region. Thr709 bears the Phosphothreonine mark. A phosphoserine mark is found at Ser711, Ser724, and Ser728. The segment at Val783–Leu803 is segment S9. The 145-residue stretch at Ser785 to Pro929 folds into the RCK N-terminal 2 domain. Position 916 is a phosphothreonine (Thr916). Phosphoserine occurs at positions 924 and 928. The short motif at Thr976–Glu998 is the Calcium bowl element. Residues Gln985, Asp988, Asp991, and Asp993 each contribute to the Ca(2+) site. Residues Phe1005–Phe1025 are segment S10. Residues Arg1159–Ser1184 are compositionally biased toward low complexity. The segment at Arg1159–Arg1209 is disordered. The span at Lys1193–Arg1209 shows a compositional bias: basic and acidic residues. Phosphoserine occurs at positions 1194 and 1197.

It belongs to the potassium channel family. Calcium-activated (TC 1.A.1.3) subfamily. KCa1.1/KCNMA1 sub-subfamily. As to quaternary structure, homotetramer; which constitutes the calcium-activated potassium channel. Interacts with beta subunits KCNMB1, KCNMB2, KCNMB3 and KCNMB4. Interacts with gamma subunits LRRC26, LRRC38, LRRC52 and LRRC55. Beta and gamma subunits are accessory, and modulate its activity. Interacts with RAB11B. Post-translationally, phosphorylated. Phosphorylation by kinases such as PKA and/or PKG. In smooth muscles, phosphorylation affects its activity. Palmitoylation by ZDHHC22 and ZDHHC23 within the intracellular linker between the S0 and S1 transmembrane domains regulates localization to the plasma membrane. Depalmitoylated by LYPLA1 and LYPLAL1, leading to retard exit from the trans-Golgi network.

The protein resides in the cell membrane. The enzyme catalyses K(+)(in) = K(+)(out). Ethanol and carbon monoxide-bound heme increase channel activation. Heme inhibits channel activation. Potassium channel activated by both membrane depolarization or increase in cytosolic Ca(2+) that mediates export of K(+). It is also activated by the concentration of cytosolic Mg(2+). Its activation dampens the excitatory events that elevate the cytosolic Ca(2+) concentration and/or depolarize the cell membrane. It therefore contributes to repolarization of the membrane potential. Plays a key role in controlling excitability in a number of systems, such as regulation of the contraction of smooth muscle, the tuning of hair cells in the cochlea, regulation of transmitter release, and innate immunity. In smooth muscles, its activation by high level of Ca(2+), caused by ryanodine receptors in the sarcoplasmic reticulum, regulates the membrane potential. In cochlea cells, its number and kinetic properties partly determine the characteristic frequency of each hair cell and thereby helps to establish a tonotopic map. Kinetics of KCNMA1 channels are determined by alternative splicing, phosphorylation status and its combination with modulating beta subunits. Highly sensitive to both iberiotoxin (IbTx) and charybdotoxin (CTX). In terms of biological role, potassium channel activated by both membrane depolarization or increase in cytosolic Ca(2+) that mediates export of K(+). This Mus musculus (Mouse) protein is Calcium-activated potassium channel subunit alpha-1 (Kcnma1).